The chain runs to 394 residues: Elongation factor Tu (394 aa).

Residues Lys-10–Thr-204 enclose the tr-type G domain. The tract at residues Gly-19 to Thr-26 is G1. Gly-19–Thr-26 is a GTP binding site. Thr-26 lines the Mg(2+) pocket. The G2 stretch occupies residues Gly-60–Asn-64. The tract at residues Asp-81 to Gly-84 is G3. Residues Asp-81 to His-85 and Asn-136 to Asp-139 contribute to the GTP site. Positions Asn-136–Asp-139 are G4. Positions Ser-174–Leu-176 are G5.

It belongs to the TRAFAC class translation factor GTPase superfamily. Classic translation factor GTPase family. EF-Tu/EF-1A subfamily. In terms of assembly, monomer.

The protein localises to the cytoplasm. It catalyses the reaction GTP + H2O = GDP + phosphate + H(+). Its function is as follows. GTP hydrolase that promotes the GTP-dependent binding of aminoacyl-tRNA to the A-site of ribosomes during protein biosynthesis. The chain is Elongation factor Tu from Malacoplasma penetrans (strain HF-2) (Mycoplasma penetrans).